The following is a 134-amino-acid chain: UPF0102 protein SYNW1051 (134 aa).

Belongs to the UPF0102 family.

The sequence is that of UPF0102 protein SYNW1051 from Parasynechococcus marenigrum (strain WH8102).